The sequence spans 244 residues: UPF0246 protein SGO_1307 (244 aa).

Belongs to the UPF0246 family.

The protein is UPF0246 protein SGO_1307 of Streptococcus gordonii (strain Challis / ATCC 35105 / BCRC 15272 / CH1 / DL1 / V288).